Consider the following 155-residue polypeptide: MVQSTVELWQKNLHRAKQARDLVFDYALGTSLITLLPIAGYYSLRLLLVLFLLVKMCRDIGKIWQFPRGQDLLAIAGNIFGAIGAVITAAVVWVTLLAIGIWVPYFDSFKGFAGLFTLTWMLGQSTNQYYANGALGHRFHQPVQPDQESINHGHL.

The next 2 helical transmembrane spans lie at 33-53 and 83-103; these read ITLL…LFLL and IGAV…GIWV.

To E.coli YdgK.

The protein resides in the cell membrane. This is an uncharacterized protein from Synechocystis sp. (strain ATCC 27184 / PCC 6803 / Kazusa).